The primary structure comprises 83 residues: Cytochrome b559 subunit alpha (83 aa).

A helical transmembrane segment spans residues 21–35 (VIHSITIPSLFIAGW). His23 is a binding site for heme.

It belongs to the PsbE/PsbF family. Heterodimer of an alpha subunit and a beta subunit. PSII is composed of 1 copy each of membrane proteins PsbA, PsbB, PsbC, PsbD, PsbE, PsbF, PsbH, PsbI, PsbJ, PsbK, PsbL, PsbM, PsbT, PsbX, PsbY, PsbZ, Psb30/Ycf12, at least 3 peripheral proteins of the oxygen-evolving complex and a large number of cofactors. It forms dimeric complexes. The cofactor is heme b.

It localises to the plastid. The protein resides in the chloroplast thylakoid membrane. This b-type cytochrome is tightly associated with the reaction center of photosystem II (PSII). PSII is a light-driven water:plastoquinone oxidoreductase that uses light energy to abstract electrons from H(2)O, generating O(2) and a proton gradient subsequently used for ATP formation. It consists of a core antenna complex that captures photons, and an electron transfer chain that converts photonic excitation into a charge separation. The protein is Cytochrome b559 subunit alpha of Ginkgo biloba (Ginkgo).